The primary structure comprises 87 residues: Small ribosomal subunit protein bS16 (87 aa).

Belongs to the bacterial ribosomal protein bS16 family.

The chain is Small ribosomal subunit protein bS16 from Psychrobacter sp. (strain PRwf-1).